The sequence spans 221 residues: Mitochondrial cardiolipin hydrolase (221 aa).

The Mitochondrial intermembrane portion of the chain corresponds to 1–4 (MGRS). Residues 1–38 (MGRSSWRLVFAAGAGLALALEALPWLMRWLLAGRRPRR) form a required for mitochondrial localization region. The chain crosses the membrane as a helical span at residues 5–27 (SWRLVFAAGAGLALALEALPWLM). The Cytoplasmic portion of the chain corresponds to 28–221 (RWLLAGRRPR…SFFPQKHRGH (194 aa)). The C3H1-type; atypical zinc finger occupies 44 to 75 (PSQVTCTEALLQAPGLPPGPSGCPCSLPHSES). A PLD phosphodiesterase domain is found at 148-175 (DLGYMHHKFAIVDKKVLITGSLNWTTQA). Catalysis depends on residues histidine 153, lysine 155, and aspartate 160.

It belongs to the phospholipase D family. MitoPLD/Zucchini subfamily. As to quaternary structure, homodimer. Interacts with MOV10L1. Interacts with MIGA1 and MIGA2; possibly facilitating homodimer formation. Interacts with GK2. In terms of tissue distribution, predominantly expressed in testis (at protein level) and in growing ovary. Also expressed in the brain, eye and urinary bladder (at protein level), but its levels were low or undetectable in other organs.

It is found in the mitochondrion outer membrane. It localises to the nucleus membrane. Its subcellular location is the cell membrane. The protein resides in the golgi apparatus. It carries out the reaction a cardiolipin + H2O = a 1,2-diacyl-sn-glycero-3-phospho-(1'-sn-glycerol) + a 1,2-diacyl-sn-glycero-3-phosphate + H(+). Its activity is regulated as follows. Single stranded DNA (ssDNA) hydrolase activity does not depend upon, but is stimulated by the presence of Ca(2+) and Mn(2+). MIGA1 and MIGA2 increase PLD6 self-association affinity and affects the homodimer conformation facilitating its phospholipase activity over the nuclease activity. MYC induces its expression and stimulates its phospholipase activity. Presents phospholipase and nuclease activities, depending on the different physiological conditions. Interaction with Mitoguardin (MIGA1 or MIGA2) affects the dimer conformation, facilitating the lipase activity over the nuclease activity. Plays a key role in mitochondrial fusion and fission via its phospholipase activity. In its phospholipase role, it uses the mitochondrial lipid cardiolipin as substrate to generate phosphatidate (PA or 1,2-diacyl-sn-glycero-3-phosphate), a second messenger signaling lipid. Production of PA facilitates Mitofusin-mediated fusion, whereas the cleavage of PA by the Lipin family of phosphatases produces diacylgycerol (DAG) which promotes mitochondrial fission. Both Lipin and DAG regulate mitochondrial dynamics and membrane fusion/fission, important processes for adapting mitochondrial metabolism to changes in cell physiology. Mitochondrial fusion enables cells to cope with the increased nucleotide demand during DNA synthesis. Mitochondrial function and dynamics are closely associated with biological processes such as cell growth, proliferation, and differentiation. Mediator of MYC activity, promotes mitochondrial fusion and activates AMPK which in turn inhibits YAP/TAZ, thereby inducing cell growth and proliferation. The endonuclease activity plays a critical role in PIWI-interacting RNA (piRNA) biogenesis during spermatogenesis. Implicated in spermatogenesis and sperm fertility in testicular germ cells, its single strand-specific nuclease activity is critical for the biogenesis/maturation of PIWI-interacting RNA (piRNA). MOV10L1 selectively binds to piRNA precursors and funnels them to the endonuclease that catalyzes the first cleavage step of piRNA processing to generate piRNA intermediate fragments that are subsequently loaded to Piwi proteins. Cleaves either DNA or RNA substrates with similar affinity, producing a 5' phosphate end, in this way it participates in the processing of primary piRNA transcripts. piRNAs provide essential protection against the activity of mobile genetic elements. piRNA-mediated transposon silencing is thus critical for maintaining genome stability, in particular in germline cells when transposons are mobilized as a consequence of wide-spread genomic demethylation. PA may act as signaling molecule in the recognition/transport of the precursor RNAs of primary piRNAs. Interacts with tesmin in testes, suggesting a role in spermatogenesis via association with its interacting partner. The polypeptide is Mitochondrial cardiolipin hydrolase (Pld6) (Mus musculus (Mouse)).